The chain runs to 364 residues: tRNA-specific 2-thiouridylase MnmA (364 aa).

ATP-binding positions include 6 to 13 (AMSGGVDS) and leucine 32. Cysteine 101 acts as the Nucleophile in catalysis. Cysteine 101 and cysteine 193 form a disulfide bridge. ATP is bound at residue glycine 125. Residues 143-145 (KDQ) are interaction with tRNA. The Cysteine persulfide intermediate role is filled by cysteine 193.

It belongs to the MnmA/TRMU family.

Its subcellular location is the cytoplasm. The catalysed reaction is S-sulfanyl-L-cysteinyl-[protein] + uridine(34) in tRNA + AH2 + ATP = 2-thiouridine(34) in tRNA + L-cysteinyl-[protein] + A + AMP + diphosphate + H(+). Functionally, catalyzes the 2-thiolation of uridine at the wobble position (U34) of tRNA, leading to the formation of s(2)U34. The chain is tRNA-specific 2-thiouridylase MnmA from Rhodococcus jostii (strain RHA1).